The sequence spans 634 residues: Ankyrin repeat and SOCS box protein 2 (634 aa).

The UIM domain occupies 26-45 (SEEELLQMAIEQSLADKTRG). The segment at 36–82 (EQSLADKTRGPTPAEASASSQTNHQPGHFHPWTRSPSSPENPPARAP) is disordered. ANK repeat units lie at residues 104–133 (AAMDPVLKAIKEGDEEALKIMIQDGKNLAE), 137–167 (EGWLPLHEAAYYGQLGCLKVLQQAYPGTIDQ), 171–200 (QEETALYLATCREHLDCLLSLLQAGAEPDI), 204–233 (SRETPLYKACERKNAEAVRILVRYNADANH), 237–266 (RGWTALHESVSRNDLEVMEILVSGGAKVEA), 270–299 (YSITPLFVAAQSGQLEALRFLAKHGADINT), 303–332 (DSASALYEASKNEHEDVVEFLLSQGADANK), 336–365 (DGLLPLHVASKKGNYRIVQMLLPVTSRTRV), 368–397 (SGISPLHLAAERNHDAVLEALLAARFDVNA), 410–439 (RRSSALYFAVVNNNVYATELLLLAGADPNR), 440–469 (DVISPLLVAIRHGCLRTMQLLLDHGANIDA), and 476–504 (TAFPATIMFAMKCLSLLKFLMDLGCDGEP). S371 bears the Phosphoserine mark. The SOCS box domain occupies 580–634 (EDWAVIKEKAEPPRPLAHLCRLRVRKAIGKYRIKLLDTLPLPGRLIRYLKYENTQ).

The protein belongs to the ankyrin SOCS box (ASB) family. As to quaternary structure, component of a probable ECS E3 ubiquitin-protein ligase complex which contains CUL5, either RBX1 or RNF7/RBX2, Elongin BC complex (ELOB and ELOC) and ASB2. Interacts with SKP2. Through its interaction with SKP2, likely to bridge the formation of dimeric E3-ubiquitin-protein ligase complexes composed of an ECS complex and an SCF(SKP2) complex. Interacts with JAK2; the interaction targets JAK2 for Notch-mediated proteasomal degradation. Interacts with TCF3/E2A; the interaction is mediated by SKP2 and targets TCF3 for Notch-mediated proteasomal degradation. In terms of assembly, interacts with DES. In terms of processing, monoubiquitinated. Not monoubiquitinated. Post-translationally, phosphorylation at Ser-371 is required for association with FLNA and subsequent FLNA degradation. As to expression, highest expression in muscle, heart and spleen. Highly expressed in cells of the first and second heart fields in the developing embryonic heart. At 9.5 dpc, robust expression predominantly in the left and right ventricles (RV) and to a lower extent in inflow and outflow tracts. At 10.5 and 11.5 dpc, expression is restricted to the myocardium with no expression observed in the endocardium. In terms of tissue distribution, not expressed in immature dendritic cells. Highly expressed in adult skeletal muscle with very low levels in adult bone marrow. Expressed in immature dendritic cells and in primary dendritic cells derived from the spleen. Highly expressed in adult bone marrow with negligible levels in adult skeletal muscle. Expressed at higher levels in T helper type 2 (Th2) cells than in regulatory T (Treg) cells, type 1 helper T (Th1) cells and T helper 17 (Th17) cells.

The protein resides in the cytoplasm. Its subcellular location is the cytoskeleton. The protein localises to the stress fiber. It is found in the myofibril. It localises to the sarcomere. The protein resides in the z line. It participates in protein modification; protein ubiquitination. Its function is as follows. Substrate-recognition component of a SCF-like ECS (Elongin-Cullin-SOCS-box protein) E3 ubiquitin-protein ligase complex which mediates the ubiquitination and subsequent proteasomal degradation of target proteins. Mediates Notch-induced ubiquitination and degradation of substrates including TCF3/E2A and JAK2. Required during embryonic heart development for complete heart looping. Required for cardiomyocyte differentiation. Specifically promotes the ubiquitination of SMAD9 and targets it for proteasomal degradation, leading to avoid excessive accumulation of SMAD9. Plays a role in the regulation of NK-cell migration by modulating protein levels of filamin A/FLNA via regulation of its ubiquitination and proteasome degradation. Involved in myogenic differentiation and targets filamin FLNB for proteasomal degradation but not filamin FLNA. Also targets DES for proteasomal degradation. Acts as a negative regulator of skeletal muscle mass. Functionally, targets filamins FLNA and FLNB for proteasomal degradation. This leads to enhanced adhesion of hematopoietic cells to fibronectin. Required for FLNA degradation in immature cardiomyocytes which is necessary for actin cytoskeleton remodeling, leading to proper organization of myofibrils and function of mature cardiomyocytes. Required for degradation of FLNA and FLNB in immature dendritic cells (DC) which enhances immature DC migration by promoting DC podosome formation and DC-mediated degradation of the extracellular matrix. Does not promote proteasomal degradation of tyrosine-protein kinases JAK1 or JAK2 in hematopoietic cells. The chain is Ankyrin repeat and SOCS box protein 2 from Mus musculus (Mouse).